The primary structure comprises 501 residues: Protein translocase subunit SecD (501 aa).

Helical transmembrane passes span 9-29, 339-359, 371-391, 394-414, 447-467, and 470-490; these read NLWLHLLGLVILTLLSAYAVV, AIEQGIKAGILAIILLAVVLI, ISIFLNVLFLLASMAFLGATL, PGIAGIILNMGIAVDSNVLIF, VTLLVASVILFQFGSGPVKGF, and TLALGTIASFISNVYYAKVFL.

It belongs to the SecD/SecF family. SecD subfamily. Forms a complex with SecF. Part of the essential Sec protein translocation apparatus which comprises SecA, SecYEG and auxiliary proteins SecDF. Other proteins may also be involved.

Its subcellular location is the cell inner membrane. Functionally, part of the Sec protein translocase complex. Interacts with the SecYEG preprotein conducting channel. SecDF uses the proton motive force (PMF) to complete protein translocation after the ATP-dependent function of SecA. This is Protein translocase subunit SecD from Aquifex aeolicus (strain VF5).